A 411-amino-acid polypeptide reads, in one-letter code: Peptidase T (411 aa).

His78 provides a ligand contact to Zn(2+). The active site involves Asp80. Zn(2+) is bound at residue Asp140. Residue Glu173 is the Proton acceptor of the active site. Positions 174, 196, and 379 each coordinate Zn(2+).

Belongs to the peptidase M20B family. It depends on Zn(2+) as a cofactor.

Its subcellular location is the cytoplasm. It catalyses the reaction Release of the N-terminal residue from a tripeptide.. In terms of biological role, cleaves the N-terminal amino acid of tripeptides. The chain is Peptidase T from Yersinia pestis bv. Antiqua (strain Antiqua).